The primary structure comprises 450 residues: Tubulin beta-3 chain (450 aa).

An MREI motif motif is present at residues 1–4 (MREI). Residues Q11, E69, S138, G142, T143, and G144 each contribute to the GTP site. E69 provides a ligand contact to Mg(2+). A Phosphoserine; by CDK1 modification is found at S172. Positions 204 and 226 each coordinate GTP. The tract at residues 422-450 (YQQYQDATAEEEGEMYEDDDEESEAQGPK) is disordered. A compositionally biased stretch (acidic residues) spans 429-450 (TAEEEGEMYEDDDEESEAQGPK). The residue at position 438 (E438) is a 5-glutamyl polyglutamate. S444 carries the post-translational modification Phosphoserine.

This sequence belongs to the tubulin family. Heterodimer of alpha- and beta-tubulin. A typical microtubule is a hollow water-filled tube with an outer diameter of 25 nm and an inner diameter of 15 nM. Alpha-beta heterodimers associate head-to-tail to form protofilaments running lengthwise along the microtubule wall with the beta-tubulin subunit facing the microtubule plus end conferring a structural polarity. Microtubules usually have 13 protofilaments but different protofilament numbers can be found in some organisms and specialized cells. Interacts with gamma-tubulin; the interaction allows microtubules to nucleate from the gamma-tubulin ring complex (gTuRC). Interacts with UNC5C (via cytoplasmic domain); this interaction is decreased by NTN1/Netrin-1. Interacts with NLRP5/MATER at cytoskeleton microtubules. Interacts with DPYSL5. Interacts with CFAP61. The cofactor is Mg(2+). In terms of processing, some glutamate residues at the C-terminus are polyglycylated, resulting in polyglycine chains on the gamma-carboxyl group. Glycylation is mainly limited to tubulin incorporated into axonemes (cilia and flagella) whereas glutamylation is prevalent in neuronal cells, centrioles, axonemes, and the mitotic spindle. Both modifications can coexist on the same protein on adjacent residues, and lowering polyglycylation levels increases polyglutamylation, and reciprocally. Cilia and flagella glycylation is required for their stability and maintenance. Flagella glycylation controls sperm motility. Some glutamate residues at the C-terminus are polyglutamylated, resulting in polyglutamate chains on the gamma-carboxyl group. Polyglutamylation plays a key role in microtubule severing by spastin (SPAST). SPAST preferentially recognizes and acts on microtubules decorated with short polyglutamate tails: severing activity by SPAST increases as the number of glutamates per tubulin rises from one to eight, but decreases beyond this glutamylation threshold. Glutamylation is also involved in cilia motility. Post-translationally, phosphorylated on Ser-172 by CDK1 during the cell cycle, from metaphase to telophase, but not in interphase. This phosphorylation inhibits tubulin incorporation into microtubules.

It is found in the cytoplasm. The protein localises to the cytoskeleton. Its subcellular location is the cell projection. It localises to the growth cone. The protein resides in the lamellipodium. It is found in the filopodium. In terms of biological role, tubulin is the major constituent of microtubules, protein filaments consisting of alpha- and beta-tubulin heterodimers. Microtubules grow by the addition of GTP-tubulin dimers to the microtubule end, where a stabilizing cap forms. Below the cap, alpha-beta tubulin heterodimers are in GDP-bound state, owing to GTPase activity of alpha-tubulin. TUBB3 plays a critical role in proper axon guidance and maintenance. Binding of NTN1/Netrin-1 to its receptor UNC5C might cause dissociation of UNC5C from polymerized TUBB3 in microtubules and thereby lead to increased microtubule dynamics and axon repulsion. Plays a role in dorsal root ganglion axon projection towards the spinal cord. The sequence is that of Tubulin beta-3 chain (Tubb3) from Rattus norvegicus (Rat).